We begin with the raw amino-acid sequence, 99 residues long: Cytochrome c oxidase subunit 4 isoform 1, mitochondrial (99 aa).

Residues Ser1–Asn73 are Mitochondrial matrix-facing. At Lys4 the chain carries N6-acetyllysine; alternate. Lys4 is subject to N6-succinyllysine; alternate. The residue at position 28 (Lys28) is an N6-acetyllysine. Residues Ser31 and Ser33 each carry the phosphoserine modification. Lys35 bears the N6-acetyllysine; alternate mark. The residue at position 35 (Lys35) is an N6-succinyllysine; alternate. The residue at position 42 (Lys42) is an N6-acetyllysine. A helical membrane pass occupies residues Glu74–Tyr99.

Belongs to the cytochrome c oxidase IV family. In terms of assembly, component of the cytochrome c oxidase (complex IV, CIV), a multisubunit enzyme composed of 14 subunits. The complex is composed of a catalytic core of 3 subunits MT-CO1, MT-CO2 and MT-CO3, encoded in the mitochondrial DNA, and 11 supernumerary subunits COX4I, COX5A, COX5B, COX6A, COX6B, COX6C, COX7A, COX7B, COX7C, COX8 and NDUFA4, which are encoded in the nuclear genome. The complex exists as a monomer or a dimer and forms supercomplexes (SCs) in the inner mitochondrial membrane with NADH-ubiquinone oxidoreductase (complex I, CI) and ubiquinol-cytochrome c oxidoreductase (cytochrome b-c1 complex, complex III, CIII), resulting in different assemblies (supercomplex SCI(1)III(2)IV(1) and megacomplex MCI(2)III(2)IV(2)). Interacts with PHB2; the interaction decreases in absence of SPHK2. Interacts with AFG1L. Interacts with ABCB7; this interaction allows the regulation of cellular iron homeostasis and cellular reactive oxygen species (ROS) levels in cardiomyocytes. Interacts with FLVCR2; this interaction occurs in the absence of heme and is disrupted upon heme binding. Interacts with IRGC.

The protein localises to the mitochondrion inner membrane. It participates in energy metabolism; oxidative phosphorylation. Functionally, component of the cytochrome c oxidase, the last enzyme in the mitochondrial electron transport chain which drives oxidative phosphorylation. The respiratory chain contains 3 multisubunit complexes succinate dehydrogenase (complex II, CII), ubiquinol-cytochrome c oxidoreductase (cytochrome b-c1 complex, complex III, CIII) and cytochrome c oxidase (complex IV, CIV), that cooperate to transfer electrons derived from NADH and succinate to molecular oxygen, creating an electrochemical gradient over the inner membrane that drives transmembrane transport and the ATP synthase. Cytochrome c oxidase is the component of the respiratory chain that catalyzes the reduction of oxygen to water. Electrons originating from reduced cytochrome c in the intermembrane space (IMS) are transferred via the dinuclear copper A center (CU(A)) of subunit 2 and heme A of subunit 1 to the active site in subunit 1, a binuclear center (BNC) formed by heme A3 and copper B (CU(B)). The BNC reduces molecular oxygen to 2 water molecules using 4 electrons from cytochrome c in the IMS and 4 protons from the mitochondrial matrix. This is Cytochrome c oxidase subunit 4 isoform 1, mitochondrial (COX4I1) from Mandrillus sphinx (Mandrill).